The sequence spans 1274 residues: ABC multidrug transporter E (1274 aa).

The N-linked (GlcNAc...) asparagine glycan is linked to N48. Residues 120-344 form the ABC transmembrane type-1 1 domain; the sequence is FCFRVTGLRV…IASPLIIVSK (225 aa). 4 helical membrane-spanning segments follow: residues 183-203, 205-225, 280-300, and 321-341; these read LALLLAAFIIAFKYSWALTLV, SSALLFVVVGCSVTLPFMTKI, IFGIHFALVFFALYASFSLAF, and VFFSVMIVVSVLGNIASPLII. Positions 377 to 629 constitute an ABC transporter 1 domain; sequence IIFRDVRFTY…EGGVYRDLVN (253 aa). 412–419 serves as a coordination point for ATP; it reads GPSGSGKS. N-linked (GlcNAc...) asparagine glycosylation is found at N473 and N580. 2 helical membrane-spanning segments follow: residues 697–717 and 737–757; these read VAVLISTAGAGTAFPLQSWLF and FWALMFFLLALAVGVLYSTVG. The 288-residue stretch at 697–984 folds into the ABC transmembrane type-1 2 domain; it reads VAVLISTAGA…FFSFASNFAQ (288 aa). The N-linked (GlcNAc...) asparagine glycan is linked to N792. 3 helical membrane passes run 818-838, 840-860, and 924-944; these read FPLISTFSMIGCIAIAFSFGW, LSLVTVFAALPCTFLAAFMRI, and LIFAFSDSVELCAMALTFWYG. Residues 1023 to 1269 form the ABC transporter 2 domain; the sequence is VEFHDVSFRY…KGTYWQMVSS (247 aa). Residue N1044 is glycosylated (N-linked (GlcNAc...) asparagine). 1057-1064 is an ATP binding site; the sequence is GPSGCGKT. N1117 carries an N-linked (GlcNAc...) asparagine glycan.

Belongs to the ABC transporter superfamily. ABCB family. Multidrug resistance exporter (TC 3.A.1.201) subfamily.

The protein resides in the cell membrane. Pleiotropic ABC efflux transporter that may be involved in A.fumigatus adaptation to azoles such as vorizonazole. In Aspergillus fumigatus (strain ATCC MYA-4609 / CBS 101355 / FGSC A1100 / Af293) (Neosartorya fumigata), this protein is ABC multidrug transporter E.